We begin with the raw amino-acid sequence, 91 residues long: Small ribosomal subunit protein uS19 (91 aa).

The protein belongs to the universal ribosomal protein uS19 family.

In terms of biological role, protein S19 forms a complex with S13 that binds strongly to the 16S ribosomal RNA. This Prochlorococcus marinus (strain SARG / CCMP1375 / SS120) protein is Small ribosomal subunit protein uS19.